We begin with the raw amino-acid sequence, 467 residues long: Protein indeterminate-domain 6, chloroplastic (467 aa).

The N-terminal 20 residues, 1-20 (MSSSYNTIALSSTPTFLLSS), are a transit peptide targeting the chloroplast. Residues 38–65 (TMVQQQPTSSVAPPPKKRRNQPGNPNPD) form a disordered region. The segment covering 39-48 (MVQQQPTSSV) has biased composition (polar residues). S72 carries the phosphoserine modification. 2 C2H2-type zinc fingers span residues 82-104 (FLCEVCNKGFQREQNLQLHRRGH) and 123-153 (YLCPEPSCVHHDPARALGDLTGIKKHYYRKH). The segment at 158-181 (WKCDKCSKRYAVQSDWKAHSKTCG) adopts a C2H2-type 2; degenerate zinc-finger fold. The Zn(2+) site is built by C160, C163, H176, C180, C187, C189, H202, and C206. The CCHC-type 2; atypical zinc-finger motif lies at 185 to 208 (YRCDCGTIFSRRDSYITHRAFCDA). The segment at 195–207 (RRDSYITHRAFCD) is SHR-binding. The disordered stretch occupies residues 440-467 (NGRGGRSGGPPLDAEMKFSHPNHPYGKA).

Its subcellular location is the plastid. It localises to the chloroplast. Its function is as follows. Probable transcription factor. This Arabidopsis thaliana (Mouse-ear cress) protein is Protein indeterminate-domain 6, chloroplastic.